Consider the following 207-residue polypeptide: Large ribosomal subunit protein uL4 (207 aa).

The disordered stretch occupies residues histidine 49–isoleucine 78.

Belongs to the universal ribosomal protein uL4 family. As to quaternary structure, part of the 50S ribosomal subunit.

Functionally, one of the primary rRNA binding proteins, this protein initially binds near the 5'-end of the 23S rRNA. It is important during the early stages of 50S assembly. It makes multiple contacts with different domains of the 23S rRNA in the assembled 50S subunit and ribosome. Its function is as follows. Forms part of the polypeptide exit tunnel. The sequence is that of Large ribosomal subunit protein uL4 from Streptococcus pneumoniae serotype 2 (strain D39 / NCTC 7466).